The sequence spans 232 residues: 7-cyano-7-deazaguanine synthase (232 aa).

ATP is bound at residue 7-17; it reads CSGGLDSVSLA. Residues cysteine 185, cysteine 193, cysteine 196, and cysteine 199 each coordinate Zn(2+).

It belongs to the QueC family. Zn(2+) is required as a cofactor.

It catalyses the reaction 7-carboxy-7-deazaguanine + NH4(+) + ATP = 7-cyano-7-deazaguanine + ADP + phosphate + H2O + H(+). It functions in the pathway purine metabolism; 7-cyano-7-deazaguanine biosynthesis. Its function is as follows. Catalyzes the ATP-dependent conversion of 7-carboxy-7-deazaguanine (CDG) to 7-cyano-7-deazaguanine (preQ(0)). This is 7-cyano-7-deazaguanine synthase from Chelativorans sp. (strain BNC1).